A 736-amino-acid polypeptide reads, in one-letter code: Phosphoribosylformylglycinamidine synthase subunit PurL (736 aa).

Residue His-48 is part of the active site. ATP contacts are provided by Tyr-51 and Lys-90. Position 92 (Glu-92) interacts with Mg(2+). Residues Ser-93–His-96 and Arg-115 contribute to the substrate site. Residue His-94 is the Proton acceptor of the active site. Asp-116 is a Mg(2+) binding site. Substrate is bound at residue Gln-239. Position 267 (Asp-267) interacts with Mg(2+). Glu-311 to Gln-313 contacts substrate. The ATP site is built by Asp-492 and Gly-529. Position 530 (Asn-530) interacts with Mg(2+). Ser-532 contributes to the substrate binding site.

It belongs to the FGAMS family. As to quaternary structure, monomer. Part of the FGAM synthase complex composed of 1 PurL, 1 PurQ and 2 PurS subunits.

It localises to the cytoplasm. It catalyses the reaction N(2)-formyl-N(1)-(5-phospho-beta-D-ribosyl)glycinamide + L-glutamine + ATP + H2O = 2-formamido-N(1)-(5-O-phospho-beta-D-ribosyl)acetamidine + L-glutamate + ADP + phosphate + H(+). It functions in the pathway purine metabolism; IMP biosynthesis via de novo pathway; 5-amino-1-(5-phospho-D-ribosyl)imidazole from N(2)-formyl-N(1)-(5-phospho-D-ribosyl)glycinamide: step 1/2. In terms of biological role, part of the phosphoribosylformylglycinamidine synthase complex involved in the purines biosynthetic pathway. Catalyzes the ATP-dependent conversion of formylglycinamide ribonucleotide (FGAR) and glutamine to yield formylglycinamidine ribonucleotide (FGAM) and glutamate. The FGAM synthase complex is composed of three subunits. PurQ produces an ammonia molecule by converting glutamine to glutamate. PurL transfers the ammonia molecule to FGAR to form FGAM in an ATP-dependent manner. PurS interacts with PurQ and PurL and is thought to assist in the transfer of the ammonia molecule from PurQ to PurL. The protein is Phosphoribosylformylglycinamidine synthase subunit PurL of Beijerinckia indica subsp. indica (strain ATCC 9039 / DSM 1715 / NCIMB 8712).